We begin with the raw amino-acid sequence, 251 residues long: Large ribosomal subunit protein uL3 (251 aa).

Position 151 is an N5-methylglutamine (Gln151). The interval 214–251 is disordered; the sequence is KDAPFPAGLKSAANSNSAPTETPAEEVAAPEATEGQEG. Positions 231–251 are enriched in low complexity; it reads APTETPAEEVAAPEATEGQEG.

Belongs to the universal ribosomal protein uL3 family. In terms of assembly, part of the 50S ribosomal subunit. Forms a cluster with proteins L14 and L19. In terms of processing, methylated by PrmB.

Functionally, one of the primary rRNA binding proteins, it binds directly near the 3'-end of the 23S rRNA, where it nucleates assembly of the 50S subunit. The sequence is that of Large ribosomal subunit protein uL3 from Rhizorhabdus wittichii (strain DSM 6014 / CCUG 31198 / JCM 15750 / NBRC 105917 / EY 4224 / RW1) (Sphingomonas wittichii).